The sequence spans 99 residues: Large ribosomal subunit protein eL21 (99 aa).

It belongs to the eukaryotic ribosomal protein eL21 family.

This is Large ribosomal subunit protein eL21 from Methanocella arvoryzae (strain DSM 22066 / NBRC 105507 / MRE50).